The primary structure comprises 509 residues: Scavenger receptor class B member 1 (509 aa).

Over 1-11 (MGVSSRARWVA) the chain is Cytoplasmic. Residues 12–32 (LGLGVLGLLCAALGVIMILMV) form a helical membrane-spanning segment. At 33–440 (PSLIKQQVLK…YTQLVLMPQV (408 aa)) the chain is on the extracellular side. N-linked (GlcNAc...) asparagine glycans are attached at residues asparagine 102, asparagine 108, asparagine 116, asparagine 173, asparagine 212, asparagine 227, asparagine 255, asparagine 310, asparagine 330, and asparagine 383. The cysteines at positions 251 and 384 are disulfide-linked. The helical transmembrane segment at 441-461 (LHYAQYVLLGLGGLLLLVPII) threads the bilayer. Topologically, residues 462–509 (YQLRSQEKCFLFWSGSKKGSQDKEAMQAYSESLMSPAAKGTVLQEAKL) are cytoplasmic.

Belongs to the CD36 family. In terms of assembly, the C-terminal region binds to PDZK1. Post-translationally, N-glycosylated. In terms of processing, the six cysteines of the extracellular domain are all involved in intramolecular disulfide bonds.

It localises to the cell membrane. It is found in the membrane. Its subcellular location is the caveola. In terms of biological role, receptor for different ligands such as phospholipids, cholesterol ester, lipoproteins, phosphatidylserine and apoptotic cells. Receptor for HDL, mediating selective uptake of cholesteryl ether and HDL-dependent cholesterol efflux. Also facilitates the flux of free and esterified cholesterol between the cell surface and apoB-containing lipoproteins and modified lipoproteins, although less efficiently than HDL. May be involved in the phagocytosis of apoptotic cells, via its phosphatidylserine binding activity. The chain is Scavenger receptor class B member 1 (Scarb1) from Rattus norvegicus (Rat).